Reading from the N-terminus, the 374-residue chain is N-acetyldiaminopimelate deacetylase (374 aa).

Residue D68 is part of the active site. Catalysis depends on E127, which acts as the Proton acceptor.

Belongs to the peptidase M20A family. N-acetyldiaminopimelate deacetylase subfamily.

It catalyses the reaction N-acetyl-(2S,6S)-2,6-diaminopimelate + H2O = (2S,6S)-2,6-diaminopimelate + acetate. Its pathway is amino-acid biosynthesis; L-lysine biosynthesis via DAP pathway; LL-2,6-diaminopimelate from (S)-tetrahydrodipicolinate (acetylase route): step 3/3. Catalyzes the conversion of N-acetyl-diaminopimelate to diaminopimelate and acetate. In Shouchella clausii (strain KSM-K16) (Alkalihalobacillus clausii), this protein is N-acetyldiaminopimelate deacetylase.